Consider the following 249-residue polypeptide: Transcription factor MYB90 (249 aa).

2 HTH myb-type domains span residues 5–57 (SKGL…LNYL) and 58–112 (KPSI…SKKH). DNA-binding regions (H-T-H motif) lie at residues 33–57 (WHQV…LNYL) and 85–108 (WSLI…NTHL).

As to quaternary structure, interacts with BHLH12/MYC1, BHLH1/GL3/MYC6, BHLH2/EGL3/MYC146, and BHLH42/TT8. Expressed only in leaves and siliques.

It localises to the nucleus. Functionally, transcription activator, when associated with BHLH12/MYC1, EGL3, or GL3. Promotes the synthesis of phenylpropanoid-derived compounds such as anthocyanins. The sequence is that of Transcription factor MYB90 (MYB90) from Arabidopsis thaliana (Mouse-ear cress).